The following is a 395-amino-acid chain: Methylmalonyl-CoA decarboxylase subunit beta (395 aa).

9 consecutive transmembrane segments (helical) span residues 17–37, 43–63, 103–123, 128–148, 180–200, 230–250, 278–298, 304–324, and 374–394; these read LNMGSIIMMLVACVFLYLAIA, LLLVPISFGILLTNLPFAGMM, GIFPPLIFLGVGAMTDFGPLI, SLLLGAAAQFGIFVTFFGAIA, PHLMGPIAVAAYSYMALVPII, IIFPIVVTILVSLIVPPAATL, INIITIFLGVTVGATATAEAF, LAILGLGIVAFGIGTGSGVLL, and GPNVAGVIGSAVSAGVLLSLF.

Belongs to the GcdB/MmdB/OadB family. The methylmalonyl-CoA decarboxylase is composed of four subunits: the carboxyltransferase alpha subunit (MmdA), the tunnel beta subunit (MmdB), the biotin-containing gamma subunit (MmdC) and the delta subunit (MmdD). Post-translationally, the N-terminus is blocked.

Its subcellular location is the cell membrane. The enzyme catalyses (S)-methylmalonyl-CoA + Na(+)(in) + H(+)(out) = propanoyl-CoA + Na(+)(out) + CO2. In terms of biological role, tunnel subunit of the sodium ion pump methylmalonyl-CoA decarboxylase, which converts the chemical energy of a decarboxylation reaction into an electrochemical gradient of Na(+) ions across the cytoplasmic membrane, thereby creating a sodium ion motive force that is used for ATP synthesis. The beta subunit catalyzes the decarboxylation of the carboxybiotin carrier protein and the coupled export of Na(+) ions. The chain is Methylmalonyl-CoA decarboxylase subunit beta from Propionigenium modestum.